Reading from the N-terminus, the 161-residue chain is Cyclic pyranopterin monophosphate synthase (161 aa).

Substrate-binding positions include 75 to 77 and 113 to 114; these read LCH and ME. D128 is an active-site residue.

It belongs to the MoaC family. In terms of assembly, homohexamer; trimer of dimers.

It carries out the reaction (8S)-3',8-cyclo-7,8-dihydroguanosine 5'-triphosphate = cyclic pyranopterin phosphate + diphosphate. Its pathway is cofactor biosynthesis; molybdopterin biosynthesis. Functionally, catalyzes the conversion of (8S)-3',8-cyclo-7,8-dihydroguanosine 5'-triphosphate to cyclic pyranopterin monophosphate (cPMP). The chain is Cyclic pyranopterin monophosphate synthase from Erwinia tasmaniensis (strain DSM 17950 / CFBP 7177 / CIP 109463 / NCPPB 4357 / Et1/99).